Reading from the N-terminus, the 251-residue chain is 2,3-bisphosphoglycerate-dependent phosphoglycerate mutase (251 aa).

Residues 7 to 14 (RHGESEWN), 20 to 21 (TG), R59, 86 to 89 (ERHY), K97, 113 to 114 (RR), and 186 to 187 (GN) each bind substrate. The Tele-phosphohistidine intermediate role is filled by H8. E86 acts as the Proton donor/acceptor in catalysis.

The protein belongs to the phosphoglycerate mutase family. BPG-dependent PGAM subfamily.

It carries out the reaction (2R)-2-phosphoglycerate = (2R)-3-phosphoglycerate. Its pathway is carbohydrate degradation; glycolysis; pyruvate from D-glyceraldehyde 3-phosphate: step 3/5. In terms of biological role, catalyzes the interconversion of 2-phosphoglycerate and 3-phosphoglycerate. The protein is 2,3-bisphosphoglycerate-dependent phosphoglycerate mutase of Treponema pallidum (strain Nichols).